Consider the following 226-residue polypeptide: Thymidylate kinase (226 aa).

12–19 (GIDGAGKS) provides a ligand contact to ATP.

The protein belongs to the thymidylate kinase family.

It catalyses the reaction dTMP + ATP = dTDP + ADP. Functionally, phosphorylation of dTMP to form dTDP in both de novo and salvage pathways of dTTP synthesis. This Verminephrobacter eiseniae (strain EF01-2) protein is Thymidylate kinase.